Here is a 1336-residue protein sequence, read N- to C-terminus: Coiled-coil and C2 domain-containing protein 2A (1336 aa).

2 disordered regions span residues 1–29 and 70–97; these read MEAALSRKTAKKKRKTHTTRGYRKREQEV and VEDCQESDEDSGGELAEEPTDSPSQTFI. Residues 8-23 show a composition bias toward basic residues; it reads KTAKKKRKTHTTRGYR. Over residues 70–89 the composition is skewed to acidic residues; it reads VEDCQESDEDSGGELAEEPT. Residues 136 to 156 adopt a coiled-coil conformation; the sequence is LSDLSELKDSQIRMLNRYQEQ. The C2 domain maps to 755-915; that stretch reads PREPSGWSGH…LASRTFEGCI (161 aa).

In terms of assembly, probable component of the tectonic-like complex (also named MKS complex), composed of B9d1, B9d2, Cc2d2a, Mks1 and tctn. In terms of tissue distribution, expressed in the antennae of chordotonal neurons and male germ cells (at protein level).

It localises to the cytoplasm. The protein resides in the cytoskeleton. It is found in the cilium basal body. The protein localises to the microtubule organizing center. Its subcellular location is the centrosome. It localises to the centriole. Functionally, probable component of the tectonic-like complex (also named MKS complex), a complex localized at the transition zone of primary cilia. Required for ciliary structure and function. The sequence is that of Coiled-coil and C2 domain-containing protein 2A from Drosophila melanogaster (Fruit fly).